Here is a 495-residue protein sequence, read N- to C-terminus: Leucine aminopeptidase 2 (495 aa).

An N-terminal signal peptide occupies residues 1-21; sequence MKSQLLSLAVAVTTISQGVVG. The 95-residue stretch at 124 to 218 folds into the PA domain; that stretch reads PPASKIMAEL…EDGKNLATLV (95 aa). N-linked (GlcNAc...) asparagine glycosylation is found at Asn142 and Asn235. Zn(2+)-binding residues include His259 and Asp271. The N-linked (GlcNAc...) asparagine glycan is linked to Asn272. Catalysis depends on Glu303, which acts as the Proton acceptor. Residues Glu304 and Asp332 each contribute to the Zn(2+) site. N-linked (GlcNAc...) asparagine glycosylation occurs at Asn352. A Zn(2+)-binding site is contributed by His430.

Belongs to the peptidase M28 family. M28A subfamily. Monomer. Zn(2+) is required as a cofactor.

It localises to the secreted. Its activity is regulated as follows. Activity is inhibited by EDTA, o-phenanthroline, bestatin and amastatin. Extracellular aminopeptidase that releases a wide variety of amino acids from natural peptides and contributes to pathogenicity. This chain is Leucine aminopeptidase 2 (LAP2), found in Trichophyton rubrum (Athlete's foot fungus).